Reading from the N-terminus, the 197-residue chain is Holliday junction branch migration complex subunit RuvA (197 aa).

The tract at residues 1 to 63 (MISSLRGEVL…EDSMTLYGFV (63 aa)) is domain I. A domain II region spans residues 64 to 139 (DGETRDLFLT…KVGPAGSAAT (76 aa)). Positions 139 to 143 (TAPAV) are flexible linker. The segment at 144 to 197 (NGHTVRAPVVEALVGLGFAAKQAEEATDKVLAGDGEATTSSALRAALSLLGKAR) is domain III.

The protein belongs to the RuvA family. Homotetramer. Forms an RuvA(8)-RuvB(12)-Holliday junction (HJ) complex. HJ DNA is sandwiched between 2 RuvA tetramers; dsDNA enters through RuvA and exits via RuvB. An RuvB hexamer assembles on each DNA strand where it exits the tetramer. Each RuvB hexamer is contacted by two RuvA subunits (via domain III) on 2 adjacent RuvB subunits; this complex drives branch migration. In the full resolvosome a probable DNA-RuvA(4)-RuvB(12)-RuvC(2) complex forms which resolves the HJ.

It localises to the cytoplasm. Its function is as follows. The RuvA-RuvB-RuvC complex processes Holliday junction (HJ) DNA during genetic recombination and DNA repair, while the RuvA-RuvB complex plays an important role in the rescue of blocked DNA replication forks via replication fork reversal (RFR). RuvA specifically binds to HJ cruciform DNA, conferring on it an open structure. The RuvB hexamer acts as an ATP-dependent pump, pulling dsDNA into and through the RuvAB complex. HJ branch migration allows RuvC to scan DNA until it finds its consensus sequence, where it cleaves and resolves the cruciform DNA. The polypeptide is Holliday junction branch migration complex subunit RuvA (Mycobacterium marinum (strain ATCC BAA-535 / M)).